Here is a 93-residue protein sequence, read N- to C-terminus: Large ribosomal subunit protein eL31 (93 aa).

It belongs to the eukaryotic ribosomal protein eL31 family.

The protein is Large ribosomal subunit protein eL31 of Methanosarcina mazei (strain ATCC BAA-159 / DSM 3647 / Goe1 / Go1 / JCM 11833 / OCM 88) (Methanosarcina frisia).